Reading from the N-terminus, the 364-residue chain is Chorismate synthase (364 aa).

R47 contributes to the NADP(+) binding site. FMN is bound by residues 125–127 (RFS), G285, 300–304 (KPTPS), and R327.

The protein belongs to the chorismate synthase family. As to quaternary structure, homotetramer. FMNH2 serves as cofactor.

It catalyses the reaction 5-O-(1-carboxyvinyl)-3-phosphoshikimate = chorismate + phosphate. The protein operates within metabolic intermediate biosynthesis; chorismate biosynthesis; chorismate from D-erythrose 4-phosphate and phosphoenolpyruvate: step 7/7. Functionally, catalyzes the anti-1,4-elimination of the C-3 phosphate and the C-6 proR hydrogen from 5-enolpyruvylshikimate-3-phosphate (EPSP) to yield chorismate, which is the branch point compound that serves as the starting substrate for the three terminal pathways of aromatic amino acid biosynthesis. This reaction introduces a second double bond into the aromatic ring system. This is Chorismate synthase from Dehalococcoides mccartyi (strain ATCC BAA-2100 / JCM 16839 / KCTC 5957 / BAV1).